Consider the following 929-residue polypeptide: DNA mismatch repair protein MutS (929 aa).

The segment at 22–46 (PAAPRSTGSAAAPPPSPAVLDDRSG) is disordered. Low complexity predominate over residues 23–32 (AAPRSTGSAA). 678–685 (GPNMAGKS) lines the ATP pocket.

This sequence belongs to the DNA mismatch repair MutS family.

This protein is involved in the repair of mismatches in DNA. It is possible that it carries out the mismatch recognition step. This protein has a weak ATPase activity. The polypeptide is DNA mismatch repair protein MutS (Rhodospirillum rubrum (strain ATCC 11170 / ATH 1.1.1 / DSM 467 / LMG 4362 / NCIMB 8255 / S1)).